The chain runs to 464 residues: MMARRDPKSWAKRLVRAQTLQKQRRAPVGPRAPPPDEEDPRLKCKNCGAFGHTARSTRCPMKCWKAALVPATLGKKEGKENLKPWKPRVEANPGPLNKDKGEKEERPRQQDPQRKALLHMFSGKPPEKPLPNGKGSTESSDHLRVASGPMPVHTTSKRPRVDPVLADRSAAEMSGRGSVLASLSPLRKASLSSSSSLGPKERQTGAAADIPQPAVRHQGREPLLVVKPTHSRPEGGCREVPQAASKTHGLLQAARPQAQDKRPAVTSQPCPPAATHSLGLGSNLSFGPGAKRPAQAPIQACLNFPKKPRLGPFQIPESAIQGGELGAPENLQPPPAATELGPSTSPQMGRRTPAQVPSVDRQPPHSTPCLPTAQACTMSHHSAASHDGAQPLRVLFRRLENGRWSSSLLAAPSFHSPEKPGAFLAQSPHVSEKSEAPCVRVPPSVLYEDLQVSSSSEDSDSDLE.

Disordered regions lie at residues 1 to 42, 70 to 389, and 415 to 437; these read MMAR…DPRL, PATL…HDGA, and HSPEKPGAFLAQSPHVSEKSEAP. Composition is skewed to basic and acidic residues over residues 74-89 and 97-114; these read GKKEGKENLKPWKPRV and NKDKGEKEERPRQQDPQR. Low complexity predominate over residues 180-197; sequence LASLSPLRKASLSSSSSL.

Belongs to the FAM90 family.

The protein is Protein FAM90A16 of Homo sapiens (Human).